Reading from the N-terminus, the 293-residue chain is Undecaprenyl-diphosphatase (293 aa).

8 consecutive transmembrane segments (helical) span residues 3-23 (IALALKAVILGIVEGLTEFLP), 43-63 (KGKIFEIVIQFGAILAVCWEF), 85-105 (ANVVIASVPAIVLAFIFGKWI), 109-129 (LFNPISVALAFIVGGVVILLA), 178-198 (FALVPGTSRSGATIIGGMLFG), 203-223 (VATEFSFFLAIPVIFGATVYE), 238-258 (IFAVGFVFAFLSAFLCVRWLL), and 269-289 (FAWYRIAFGIVVLLTAYSGLV).

The protein belongs to the UppP family.

It localises to the cell inner membrane. It carries out the reaction di-trans,octa-cis-undecaprenyl diphosphate + H2O = di-trans,octa-cis-undecaprenyl phosphate + phosphate + H(+). Its function is as follows. Catalyzes the dephosphorylation of undecaprenyl diphosphate (UPP). Confers resistance to bacitracin. This chain is Undecaprenyl-diphosphatase, found in Cupriavidus necator (strain ATCC 17699 / DSM 428 / KCTC 22496 / NCIMB 10442 / H16 / Stanier 337) (Ralstonia eutropha).